The following is a 220-amino-acid chain: uncharacterized protein (220 aa).

This is an uncharacterized protein from Schizosaccharomyces pombe (strain 972 / ATCC 24843) (Fission yeast).